We begin with the raw amino-acid sequence, 274 residues long: Cytochrome b-c1 complex subunit Rieske, mitochondrial (274 aa).

Residues 79–103 are Mitochondrial matrix-facing; the sequence is SHTDIKVPDFSDYRRSEVLDKTKSS. A helical membrane pass occupies residues 104–140; sequence RESSDARKGFSYLVTAATAVGVTYAAKSIVTQFVSSM. Residues 141–274 lie on the Mitochondrial intermembrane side of the membrane; that stretch reads SASADVLAMS…FTGDDMVIVG (134 aa). In terms of domain architecture, Rieske spans 187–272; it reads EAAVELSQLR…YEFTGDDMVI (86 aa). [2Fe-2S] cluster contacts are provided by Cys217, His219, Cys236, His239, and Ser241. Cys222 and Cys238 are joined by a disulfide.

This sequence belongs to the Rieske iron-sulfur protein family. Component of the ubiquinol-cytochrome c oxidoreductase (cytochrome b-c1 complex, complex III, CIII), a multisubunit enzyme composed of 11 subunits. The complex is composed of 3 respiratory subunits cytochrome b, cytochrome c1 and Rieske protein UQCRFS1, 2 core protein subunits UQCRC1/QCR1 and UQCRC2/QCR2, and 6 low-molecular weight protein subunits UQCRH/QCR6, UQCRB/QCR7, UQCRQ/QCR8, UQCR10/QCR9, UQCR11/QCR10 and subunit 9, the cleavage product of Rieske protein UQCRFS1. The complex exists as an obligatory dimer and forms supercomplexes (SCs) in the inner mitochondrial membrane with NADH-ubiquinone oxidoreductase (complex I, CI) and cytochrome c oxidase (complex IV, CIV), resulting in different assemblies (supercomplex SCI(1)III(2)IV(1) and megacomplex MCI(2)III(2)IV(2)). Incorporation of the Rieske protein UQCRFS1 is the penultimate step in complex III assembly. Interacts with TTC19, which is involved in the clearance of UQCRFS1 fragments. As to quaternary structure, component of the ubiquinol-cytochrome c oxidoreductase (cytochrome b-c1 complex, complex III, CIII). Subunit 9 corresponds to the mitochondrial targeting sequence (MTS) of Rieske protein UQCRFS1. It is retained after processing and incorporated inside complex III, where it remains bound to the complex and localizes between the 2 core subunits UQCRC1/QCR1 and UQCRC2/QCR2. The cofactor is [2Fe-2S] cluster. In terms of processing, proteolytic processing is necessary for the correct insertion of UQCRFS1 in the complex III dimer. Several fragments are generated during UQCRFS1 insertion, most probably due to the endogenous matrix-processing peptidase (MPP) activity of the 2 core protein subunits UQCRC1/QCR1 and UQCRC2/QCR2, which are homologous to the 2 mitochondrial-processing peptidase (MPP) subunits beta-MPP and alpha-MPP respectively. The action of the protease is also necessary for the clearance of the UQCRFS1 fragments.

Its subcellular location is the mitochondrion inner membrane. The enzyme catalyses a quinol + 2 Fe(III)-[cytochrome c](out) = a quinone + 2 Fe(II)-[cytochrome c](out) + 2 H(+)(out). Functionally, component of the ubiquinol-cytochrome c oxidoreductase, a multisubunit transmembrane complex that is part of the mitochondrial electron transport chain which drives oxidative phosphorylation. The respiratory chain contains 3 multisubunit complexes succinate dehydrogenase (complex II, CII), ubiquinol-cytochrome c oxidoreductase (cytochrome b-c1 complex, complex III, CIII) and cytochrome c oxidase (complex IV, CIV), that cooperate to transfer electrons derived from NADH and succinate to molecular oxygen, creating an electrochemical gradient over the inner membrane that drives transmembrane transport and the ATP synthase. The cytochrome b-c1 complex catalyzes electron transfer from ubiquinol to cytochrome c, linking this redox reaction to translocation of protons across the mitochondrial inner membrane, with protons being carried across the membrane as hydrogens on the quinol. In the process called Q cycle, 2 protons are consumed from the matrix, 4 protons are released into the intermembrane space and 2 electrons are passed to cytochrome c. The Rieske protein is a catalytic core subunit containing a [2Fe-2S] iron-sulfur cluster. It cycles between 2 conformational states during catalysis to transfer electrons from the quinol bound in the Q(0) site in cytochrome b to cytochrome c1. Incorporation of UQCRFS1 is the penultimate step in complex III assembly. Component of the ubiquinol-cytochrome c oxidoreductase (cytochrome b-c1 complex, complex III, CIII). UQCRFS1 undergoes proteolytic processing once it is incorporated in the complex III dimer. One of the fragments, called subunit 9, corresponds to its mitochondrial targeting sequence (MTS). The proteolytic processing is necessary for the correct insertion of UQCRFS1 in the complex III dimer, but the persistence of UQCRFS1-derived fragments may prevent newly imported UQCRFS1 to be processed and assembled into complex III and is detrimental for the complex III structure and function. This chain is Cytochrome b-c1 complex subunit Rieske, mitochondrial (UQCRFS1), found in Lagothrix lagotricha (Brown woolly monkey).